The following is a 447-amino-acid chain: DNA primase DnaG (447 aa).

The Toprim domain occupies 200 to 274 (DSIIVVEGRA…DIDYVARAPE (75 aa)). Mg(2+) is bound by residues Glu-206, Asp-248, and Asp-250. The interval 316 to 339 (ERRRGGARKQEYTKKGSLNPQPQV) is disordered.

This sequence belongs to the archaeal DnaG primase family. Forms a ternary complex with MCM helicase and DNA. Component of the archaeal exosome complex. Mg(2+) serves as cofactor.

It carries out the reaction ssDNA + n NTP = ssDNA/pppN(pN)n-1 hybrid + (n-1) diphosphate.. Functionally, RNA polymerase that catalyzes the synthesis of short RNA molecules used as primers for DNA polymerase during DNA replication. Also part of the exosome, which is a complex involved in RNA degradation. Acts as a poly(A)-binding protein that enhances the interaction between heteromeric, adenine-rich transcripts and the exosome. This Pyrococcus furiosus (strain ATCC 43587 / DSM 3638 / JCM 8422 / Vc1) protein is DNA primase DnaG.